Reading from the N-terminus, the 1447-residue chain is Baculoviral IAP repeat-containing protein 1b (1447 aa).

3 BIR repeats span residues 60–127 (EAKR…CEFL), 159–227 (EEAR…CEFL), and 278–345 (EELR…CVFL). 4 residues coordinate Zn(2+): C315, C318, H335, and C342. One can recognise an NACHT domain in the interval 508–802 (SVMCVEGEAG…EFLAAVRLTE (295 aa)). K520 contributes to the ATP binding site.

As to quaternary structure, component of the NLRC4 inflammasome, at least composed of NLRC4, caspase-1 (CASP1) and some NAIP protein. Interacts with S.typhimurium (Salmonella) PrgJ and B.thailandensis BsaK.

Its function is as follows. Sensor component of the NLRC4 inflammasome that specifically recognizes and binds type III secretion system (T3SS) rod proteins such as S.typhimurium (Salmonella) PrgJ and B.thailandensis BsaK from pathogenic bacteria. Association of pathogenic bacteria proteins drives in turn drive assembly and activation of the NLRC4 inflammasome, promoting caspase-1 activation, cytokine production and macrophage pyroptosis. The NLRC4 inflammasome is activated as part of the innate immune response to a range of intracellular bacteria. The NLRC4 inflammasome senses Gram-negative bacteria such as L.pneumophila and P.aeruginosa, enteric pathogens S.typhimurium (Salmonella) and S.flexneri. Prevents motor-neuron apoptosis induced by a variety of signals. This Mus musculus (Mouse) protein is Baculoviral IAP repeat-containing protein 1b (Naip2).